The following is a 431-amino-acid chain: Enolase (431 aa).

Substrate-binding residues include H157 and E166. Residue E209 is the Proton donor of the active site. Mg(2+)-binding residues include D244, E293, and D318. E293 and D318 together coordinate substrate. The active-site Proton acceptor is K343. Substrate-binding positions include 370-373 (SHRS) and K394.

This sequence belongs to the enolase family. Homodimer. Requires Mg(2+) as cofactor.

The protein resides in the cytoplasm. It carries out the reaction (2R)-2-phosphoglycerate = phosphoenolpyruvate + H2O. Its pathway is carbohydrate degradation; glycolysis; pyruvate from D-glyceraldehyde 3-phosphate: step 4/5. The sequence is that of Enolase (ENO) from Fasciola hepatica (Liver fluke).